Consider the following 330-residue polypeptide: Aspartate--ammonia ligase (330 aa).

Belongs to the class-II aminoacyl-tRNA synthetase family. AsnA subfamily.

It is found in the cytoplasm. The catalysed reaction is L-aspartate + NH4(+) + ATP = L-asparagine + AMP + diphosphate + H(+). It functions in the pathway amino-acid biosynthesis; L-asparagine biosynthesis; L-asparagine from L-aspartate (ammonia route): step 1/1. The chain is Aspartate--ammonia ligase from Haemophilus ducreyi (strain 35000HP / ATCC 700724).